The sequence spans 478 residues: H(+)/Cl(-) exchange transporter ClcA (478 aa).

Residues 1–32 (MTHSTQQLSPEGVAEGKRGRLIRELVNRDKTP) are Cytoplasmic-facing. Residues 33–69 (LIILIMAAVVGVVTGLLGVAFDRGVDWVQQQRLLALA) traverse the membrane as a helical segment. Topologically, residues 70 to 76 (NVADYAL) are periplasmic. A helical membrane pass occupies residues 77–100 (LVWPLAFIMSALLAMMGYFLVSRF). The Selectivity filter part_1 motif lies at 106–110 (GSGIP). Residue S107 coordinates chloride. The segment at residues 109–116 (IPEIEGAM) is an intramembrane region (helical). At 117–123 (EEMRPVR) the chain is on the cytoplasmic side. 2 helical membrane-spanning segments follow: residues 124–141 (WWRVIPVKFIGGLGTLGA) and 148–166 (EGPMVQMGGNSGRMIVDIF). Residues 146-150 (GREGP) carry the Selectivity filter part_2 motif. Residues 167–176 (RLRSPEARHS) lie on the Cytoplasmic side of the membrane. Intramembrane regions (helical) lie at residues 177-189 (LLATGAAAGLSAA) and 193-201 (PLAGILFVI). Residues 202 to 214 (EEMRSQFRYSLVS) lie on the Cytoplasmic side of the membrane. The chain crosses the membrane as a helical span at residues 215-232 (IKAVFIGVITSTIVYRYF). Over 233-252 (NGERAIIEVGKLSDAPLNTL) the chain is Periplasmic. Residues 253–281 (WLYLLLGIIFGAVGVIFNALIFRTQDMFV) form a helical membrane-spanning segment. Over 282–287 (RFHGGD) the chain is Cytoplasmic. Residues 288-309 (WRKLVLIGGLLGGMCGLLALLH) form a helical membrane-spanning segment. Topologically, residues 310 to 329 (GNAVGGGFALIPIAAAGNFS) are periplasmic. 2 consecutive transmembrane segments (helical) span residues 330–349 (IGMLLFIFIARVITTLLCFG) and 355–376 (GIFAPMLALGTILGTAFGLSCA). Residues 355–359 (GIFAP) carry the Selectivity filter part_3 motif. I356 and F357 together coordinate chloride. Residues 377 to 386 (HFFPQYGIEA) lie on the Periplasmic side of the membrane. The segment at residues 387 to 401 (GTFAIAGMGALFAAS) is an intramembrane region (helical). The note=Loop between two helices intramembrane region spans 402-404 (VRA). An intramembrane region (helical) is located at residues 405–416 (PLTGIVLVLEMT). The segment at residues 417 to 421 (DNYQL) is an intramembrane region (note=Loop between two helices). Residues 422–438 (ILPMIVTCLGATLIAQF) traverse the membrane as a helical segment. The Cytoplasmic portion of the chain corresponds to 439–478 (MGGKPLYSAILARTLAKQEQARATVIAQEPAVENTPQIGK). Residue Y445 participates in chloride binding.

This sequence belongs to the chloride channel (TC 2.A.49) family. ClcA subfamily. As to quaternary structure, homodimer.

The protein resides in the cell inner membrane. It carries out the reaction 2 chloride(in) + H(+)(out) = 2 chloride(out) + H(+)(in). In terms of biological role, proton-coupled chloride transporter. Functions as antiport system and exchanges two chloride ions for 1 proton. Probably acts as an electrical shunt for an outwardly-directed proton pump that is linked to amino acid decarboxylation, as part of the extreme acid resistance (XAR) response. The protein is H(+)/Cl(-) exchange transporter ClcA of Yersinia pestis bv. Antiqua (strain Antiqua).